A 558-amino-acid polypeptide reads, in one-letter code: Formate--tetrahydrofolate ligase (558 aa).

Residue 65 to 72 (TPAGEGKT) coordinates ATP.

It belongs to the formate--tetrahydrofolate ligase family.

It carries out the reaction (6S)-5,6,7,8-tetrahydrofolate + formate + ATP = (6R)-10-formyltetrahydrofolate + ADP + phosphate. The protein operates within one-carbon metabolism; tetrahydrofolate interconversion. The chain is Formate--tetrahydrofolate ligase from Methylobacterium nodulans (strain LMG 21967 / CNCM I-2342 / ORS 2060).